A 252-amino-acid polypeptide reads, in one-letter code: 5'-nucleotidase SurE (252 aa).

A divalent metal cation-binding residues include aspartate 8, aspartate 9, serine 40, and asparagine 93.

It belongs to the SurE nucleotidase family. A divalent metal cation is required as a cofactor.

It localises to the cytoplasm. It catalyses the reaction a ribonucleoside 5'-phosphate + H2O = a ribonucleoside + phosphate. In terms of biological role, nucleotidase that shows phosphatase activity on nucleoside 5'-monophosphates. The chain is 5'-nucleotidase SurE from Erythrobacter litoralis (strain HTCC2594).